A 498-amino-acid chain; its full sequence is Glycerol kinase (498 aa).

An ADP-binding site is contributed by Thr12. ATP contacts are provided by Thr12, Thr13, and Ser14. Thr12 contacts sn-glycerol 3-phosphate. Arg16 lines the ADP pocket. Arg82, Glu83, and Tyr134 together coordinate sn-glycerol 3-phosphate. 3 residues coordinate glycerol: Arg82, Glu83, and Tyr134. Phosphohistidine; by HPr is present on His230. Residue Asp244 participates in sn-glycerol 3-phosphate binding. Residues Asp244 and Gln245 each coordinate glycerol. 2 residues coordinate ADP: Thr266 and Gly309. ATP contacts are provided by Thr266, Gly309, Gln313, and Gly410. 2 residues coordinate ADP: Gly410 and Asn414.

The protein belongs to the FGGY kinase family. As to quaternary structure, homotetramer and homodimer (in equilibrium). Post-translationally, the phosphoenolpyruvate-dependent sugar phosphotransferase system (PTS), including enzyme I, and histidine-containing protein (HPr) are required for the phosphorylation, which leads to the activation of the enzyme.

It carries out the reaction glycerol + ATP = sn-glycerol 3-phosphate + ADP + H(+). The protein operates within polyol metabolism; glycerol degradation via glycerol kinase pathway; sn-glycerol 3-phosphate from glycerol: step 1/1. With respect to regulation, activated by phosphorylation and inhibited by fructose 1,6-bisphosphate (FBP). Functionally, key enzyme in the regulation of glycerol uptake and metabolism. Catalyzes the phosphorylation of glycerol to yield sn-glycerol 3-phosphate. The chain is Glycerol kinase from Staphylococcus aureus (strain bovine RF122 / ET3-1).